The following is a 229-amino-acid chain: Peptidase E (229 aa).

Active-site charge relay system residues include Ser-120, Asp-135, and His-157.

Belongs to the peptidase S51 family.

Its subcellular location is the cytoplasm. It catalyses the reaction Dipeptidase E catalyzes the hydrolysis of dipeptides Asp-|-Xaa. It does not act on peptides with N-terminal Glu, Asn or Gln, nor does it cleave isoaspartyl peptides.. Its function is as follows. Hydrolyzes dipeptides containing N-terminal aspartate residues. May play a role in allowing the cell to use peptide aspartate to spare carbon otherwise required for the synthesis of the aspartate family of amino acids. This Citrobacter koseri (strain ATCC BAA-895 / CDC 4225-83 / SGSC4696) protein is Peptidase E.